Here is a 205-residue protein sequence, read N- to C-terminus: 3-demethoxyubiquinol 3-hydroxylase (205 aa).

Glu-54, Glu-84, His-87, Glu-136, Glu-168, and His-171 together coordinate Fe cation.

This sequence belongs to the COQ7 family. The cofactor is Fe cation.

The protein resides in the cell membrane. The catalysed reaction is a 5-methoxy-2-methyl-3-(all-trans-polyprenyl)benzene-1,4-diol + AH2 + O2 = a 3-demethylubiquinol + A + H2O. It participates in cofactor biosynthesis; ubiquinone biosynthesis. Catalyzes the hydroxylation of 2-nonaprenyl-3-methyl-6-methoxy-1,4-benzoquinol during ubiquinone biosynthesis. In Delftia acidovorans (strain DSM 14801 / SPH-1), this protein is 3-demethoxyubiquinol 3-hydroxylase.